The chain runs to 484 residues: tRNA sulfurtransferase (484 aa).

A THUMP domain is found at 63–167 (ERLVEALKCI…NKDLFIVTQR (105 aa)). ATP is bound by residues 185–186 (LM), lysine 267, glycine 289, and glutamine 298. An intrachain disulfide couples cysteine 346 to cysteine 458. Residues 406–484 (IPENAVVVDI…GFKNVKVYRP (79 aa)) form the Rhodanese domain. Residue cysteine 458 is the Cysteine persulfide intermediate of the active site.

The protein belongs to the ThiI family.

It localises to the cytoplasm. It catalyses the reaction [ThiI sulfur-carrier protein]-S-sulfanyl-L-cysteine + a uridine in tRNA + 2 reduced [2Fe-2S]-[ferredoxin] + ATP + H(+) = [ThiI sulfur-carrier protein]-L-cysteine + a 4-thiouridine in tRNA + 2 oxidized [2Fe-2S]-[ferredoxin] + AMP + diphosphate. It carries out the reaction [ThiS sulfur-carrier protein]-C-terminal Gly-Gly-AMP + S-sulfanyl-L-cysteinyl-[cysteine desulfurase] + AH2 = [ThiS sulfur-carrier protein]-C-terminal-Gly-aminoethanethioate + L-cysteinyl-[cysteine desulfurase] + A + AMP + 2 H(+). The protein operates within cofactor biosynthesis; thiamine diphosphate biosynthesis. In terms of biological role, catalyzes the ATP-dependent transfer of a sulfur to tRNA to produce 4-thiouridine in position 8 of tRNAs, which functions as a near-UV photosensor. Also catalyzes the transfer of sulfur to the sulfur carrier protein ThiS, forming ThiS-thiocarboxylate. This is a step in the synthesis of thiazole, in the thiamine biosynthesis pathway. The sulfur is donated as persulfide by IscS. In Colwellia psychrerythraea (strain 34H / ATCC BAA-681) (Vibrio psychroerythus), this protein is tRNA sulfurtransferase.